The chain runs to 346 residues: Selenide, water dikinase (346 aa).

Sec16 is a catalytic residue. Sec16 is a non-standard amino acid (selenocysteine). ATP-binding positions include Lys19 and 47-49; that span reads TAD. A Mg(2+)-binding site is contributed by Asp50. ATP is bound by residues Asp67, Asp90, and 138-140; that span reads GHS. Asp90 lines the Mg(2+) pocket. A Mg(2+)-binding site is contributed by Asp226.

This sequence belongs to the selenophosphate synthase 1 family. Class I subfamily. In terms of assembly, homodimer. Requires Mg(2+) as cofactor.

It catalyses the reaction hydrogenselenide + ATP + H2O = selenophosphate + AMP + phosphate + 2 H(+). Synthesizes selenophosphate from selenide and ATP. The protein is Selenide, water dikinase of Haemophilus ducreyi (strain 35000HP / ATCC 700724).